We begin with the raw amino-acid sequence, 318 residues long: Protein LplB (318 aa).

The next 6 membrane-spanning stretches (helical) occupy residues Leu-35–Ile-55, Leu-94–Leu-114, Phe-130–Phe-150, Ile-182–Leu-202, Ile-236–Tyr-256, and Ala-289–Ala-309. The 216-residue stretch at Leu-90–Ala-305 folds into the ABC transmembrane type-1 domain.

The protein belongs to the binding-protein-dependent transport system permease family. MalFG subfamily.

It is found in the cell membrane. In Bacillus subtilis (strain 168), this protein is Protein LplB (lplB).